A 359-amino-acid polypeptide reads, in one-letter code: Peptide chain release factor 1 (359 aa).

At glutamine 236 the chain carries N5-methylglutamine. The interval 286-305 (KKEMERSTMRKSQIGSGDRS) is disordered.

It belongs to the prokaryotic/mitochondrial release factor family. Post-translationally, methylated by PrmC. Methylation increases the termination efficiency of RF1.

It is found in the cytoplasm. In terms of biological role, peptide chain release factor 1 directs the termination of translation in response to the peptide chain termination codons UAG and UAA. The sequence is that of Peptide chain release factor 1 from Wolbachia pipientis wMel.